A 199-amino-acid polypeptide reads, in one-letter code: Thioredoxin reductase-like selenoprotein T (199 aa).

The N-terminal stretch at 1–24 is a signal peptide; that stretch reads MRAAGLGLGIGLLLLAALAGPGGS. Residues 50–53 constitute a cross-link (cysteinyl-selenocysteine (Cys-Sec)); the sequence is CVSU. Residue U53 is a non-standard amino acid, selenocysteine. A helical membrane pass occupies residues 95 to 115; that stretch reads VFKLVLIGLIIVGKDPFAFFG.

Belongs to the SelWTH family. Selenoprotein T subfamily. May contain a selenide-sulfide bond between Cys-50 and Sec-53. This bond is speculated to serve as redox-active pair.

It is found in the endoplasmic reticulum membrane. It catalyses the reaction [thioredoxin]-dithiol + NADP(+) = [thioredoxin]-disulfide + NADPH + H(+). Functionally, selenoprotein with thioredoxin reductase-like oxidoreductase activity. The polypeptide is Thioredoxin reductase-like selenoprotein T (Gallus gallus (Chicken)).